The primary structure comprises 237 residues: MEKVMLSFDKVSAHYGKIQALHEVSLHINQGEIVTLIGANGAGKTTLLGTLCGDPRATSGRIVFDDKDITDWQTAKIMREAVAIVPEGRRVFSRMTVEENLAMGGFFAERDQFQERIKWVYELFPRLHERRIQRAGTMSGGEQQMLAIGRALMSNPRLLLLDEPSLGLAPIIIQQIFDTIEQLREQGMTIFLVEQNANQALKLADRGYVLENGHVVLSDTGDALLANEAVRSAYLGG.

The ABC transporter domain maps to 6–237; that stretch reads LSFDKVSAHY…EAVRSAYLGG (232 aa). 38-45 contacts ATP; the sequence is GANGAGKT.

The protein belongs to the ABC transporter superfamily.

In terms of biological role, component of the leucine-specific transport system. In Escherichia coli (strain K12), this protein is High-affinity branched-chain amino acid transport ATP-binding protein LivF (livF).